The primary structure comprises 610 residues: MSFFGSNTSLGATSTPAKTTGGLFGSPFGGTAATSQPAPAFGAQATSTPAFGAQPATSAFGAGSAFGATAAAPAFGAATGTSAFGGSAFGSTPAFGAATTTTAGTGLGGGGFGGFGAAPATSQAGLFGAPATSAAPPAFSGFGQQAAASTAPASGFSGFGTTTTSAPAFGGFGTSQSTGFGGGAFGSTFGKPANTTVTPGFGGFGGTSFMLGQPQQQPAPISADEAFAQSILNVSIFGDERDKIVAKWNYLQATWGTGKMFYSQSAAPVDITPENVMCRFKAIGYSRMPGKDNKLGLVALNFCRELSAVKPHQQQVIQTLHSLFGSKPNMLVHIDSIKELENKKCQIVIYVEEKLQHAPNESKRILATELSNYLNQATLKPQLNNLGVVEALALVLPDEDQLREYLENPPRGVDPRMWRQANSDNPDPTLYIPVPMVGFNDLKWRVKCQEQETDTHALYIKKVESELTELKKRHATATAKILEHKRKLAELSHRILRIIVKQECTRKVGTSLTPEEEALRTKLQNMLAVVSAPTQFKGRLSELLSQMRMQRNQFAANGGAEYALDKEAEDEMKTFLTMQQRAMEVLSDTVNKDLRALDVIIKGLPELRQS.

25 consecutive repeat copies span residues 4 to 5 (FG), 24 to 25 (FG), 28 to 29 (FG), 41 to 42 (FG), 51 to 52 (FG), 60 to 61 (FG), 66 to 67 (FG), 75 to 76 (FG), 84 to 85 (FG), 89 to 90 (FG), 95 to 96 (FG), 112 to 113 (FG), 115 to 116 (FG), 127 to 128 (FG), 142 to 143 (FG), 159 to 160 (FG), 169 to 170 (FG), 172 to 173 (FG), 180 to 181 (FG), 185 to 186 (FG), 189 to 190 (FG), 201 to 202 (FG), 204 to 205 (FG), 237 to 238 (FG), and 324 to 325 (FG). The 25 X 2 AA repeats of F-G stretch occupies residues 4-554 (FGSNTSLGAT…SQMRMQRNQF (551 aa)).

This sequence belongs to the NUP54 family. In terms of assembly, component of the nuclear pore complex. Interacts with Nup58. Interacts (via C-terminus) with fs(1)Yb; this interaction occurs in a RNA-independent manner. Interacts with sbr/nxf1. Interacts with Nxt1.

The protein resides in the nucleus. Its subcellular location is the nuclear pore complex. In terms of biological role, component of the nuclear pore complex (NPC), a complex required for the trafficking across the nuclear envelope. Essential for the nuclear import of nuclear localization signal (NLS)-containing proteins in an importin alpha/importin beta-dependent manner. Together with Nup58, required for transposable element silencing regulation in ovarian follicle cells. By interacting with the nuclear (Nxf1/Nxt1) and cytosolic (fs(1)Yb) components of the flamenco (flam) transcripts processing pathway, enables export and subsequent piRNA production. The protein is Probable nucleoporin Nup54 (Nup54) of Drosophila melanogaster (Fruit fly).